Consider the following 379-residue polypeptide: Zinc finger protein 883 (379 aa).

13 consecutive C2H2-type zinc fingers follow at residues 13–35 (YLCTECGKGYTCLASLTQHQKTH), 41–63 (YECKICGKSFTRNSNLVQHQRIH), 69–91 (YECNECGKAFSQSTNLIQHQRVH), 97–119 (YECNECEKTFSHRSSLRNHERIH), 125–147 (YPCNECGKAFSHISALTQHHRIH), 153–175 (YECTECGKTFSRSTHLIEHQGIH), 181–203 (YQCKQCRKVFCHSTSLIRHQRTH), 209–231 (YECNECGKAFSHTPAFIQHQRIH), 237–259 (YECNACGKAFNRSAHLTEHQRTH), 265–287 (YVCKECGKTFSRSTHLTEHLKIH), 293–315 (YQCNECQKLFCYRTSLIRHQRTH), 321–343 (YQCNECGKSFSLSSALTKHKRIH), and 349–371 (YQCTKCGDVFCHSTSLIRHQKTH).

Belongs to the krueppel C2H2-type zinc-finger protein family.

It is found in the nucleus. In terms of biological role, may be involved in transcriptional regulation. This Homo sapiens (Human) protein is Zinc finger protein 883 (ZNF883).